Consider the following 193-residue polypeptide: Deoxycytidylate deaminase (193 aa).

The CMP/dCMP-type deaminase domain occupies 1-171; the sequence is MKASTVLQIA…DILRNAGIEV (171 aa). 5 residues coordinate Zn(2+): Cys19, Cys49, His94, Glu102, and His104. Glu106 serves as the catalytic Proton donor. The Zn(2+) site is built by Cys132 and Cys135. Substrate is bound at residue Tyr153.

Belongs to the cytidine and deoxycytidylate deaminase family. Homohexamer. Zn(2+) serves as cofactor.

It carries out the reaction dCMP + H2O + H(+) = dUMP + NH4(+). Its activity is regulated as follows. Allosteric enzyme whose activity is greatly influenced by the end products of its metabolic pathway, dCTP and dTTP. Supplies the nucleotide substrate for thymidylate synthetase. This is Deoxycytidylate deaminase (CD) from Escherichia coli (Bacteriophage T4).